Reading from the N-terminus, the 146-residue chain is Large ribosomal subunit protein uL13 (146 aa).

The disordered stretch occupies residues 126–146; that stretch reads AGPKHPHAAQQPKVYEPRPRG.

This sequence belongs to the universal ribosomal protein uL13 family. As to quaternary structure, part of the 50S ribosomal subunit.

In terms of biological role, this protein is one of the early assembly proteins of the 50S ribosomal subunit, although it is not seen to bind rRNA by itself. It is important during the early stages of 50S assembly. This chain is Large ribosomal subunit protein uL13, found in Roseiflexus castenholzii (strain DSM 13941 / HLO8).